Reading from the N-terminus, the 1523-residue chain is WD repeat-containing protein 62 (1523 aa).

A2 is subject to N-acetylalanine. Phosphoserine is present on S33. Position 46 is a phosphothreonine (T46). 12 WD repeats span residues 109–150 (TTRK…QVAE), 153–194 (GHKY…VVAS), 196–234 (KVSC…EAKV), 291–330 (INLK…YLTN), 357–396 (AVYP…EVSK), 411–450 (EVYP…DTRW), 490–529 (DMKA…ELIK), 532–574 (AHDA…NLEQ), 578–618 (DHSS…DGLH), 626–665 (AEKT…QKKC), 671–713 (GDEG…KMFG), and 714–752 (HSEI…TTCM). S501 is modified (phosphoserine). Residues 762 to 824 (QEQQQQPKDQ…PSKDSLDPDP (63 aa)) are disordered. Positions 776–790 (PPSQETYASTPSEIR) are enriched in polar residues. Over residues 797-809 (QTEDEMEEECEPE) the composition is skewed to acidic residues. One copy of the WD 13 repeat lies at 803-846 (EEECEPEELLKTPSKDSLDPDPRCLLTNGKLPLWAKRLLGDDDV). Over residues 810–824 (ELLKTPSKDSLDPDP) the composition is skewed to basic and acidic residues. Phosphoserine occurs at positions 966 and 972. Positions 1000–1072 (VSSVSSKDQS…GLGNGSLPQT (73 aa)) are disordered. T1072 carries the post-translational modification Phosphothreonine. S1117, S1143, and S1169 each carry phosphoserine. The segment at 1143–1258 (SPEAQPVGQG…SLHKPLSPGQ (116 aa)) is disordered. Composition is skewed to polar residues over residues 1167–1177 (YMSSDGTNVLS) and 1199–1213 (TSVL…ISAP). Low complexity predominate over residues 1214 to 1225 (SSCSYLESTTSS). Polar residues predominate over residues 1226 to 1235 (HAKTTRSISL). S1234 is modified (phosphoserine).

As to quaternary structure, can form homodimers (via C-terminus). Interacts (via C-terminus) with MAPKBP1 (via C-terminus). Interacts with CDK5RAP2, CEP152, CEP63 and KIAA0753. CEP63, CDK5RAP2, CEP152, WDR62 are proposed to form a stepwise assembled complex at the centrosome forming a ring near parental centrioles. Prominent in neural crest lineages from 9.5 dpc to 11.5 dpc. Also expressed in the ventricular and subventricular zones during the period of cerebral cortical neurogenesis (11.5-16.5 dpc), with expression decreasing in intensity by 17.5 dpc. In the cerebellum, it is strongly expressed in precursors of granule neurons at late embryonic and early postnatal stages; by postnatal day 9 (P9). Present in fetal brain, enriched within the ventricular and subventricular zone (at protein level).

Its subcellular location is the nucleus. The protein resides in the cytoplasm. The protein localises to the cytoskeleton. It localises to the spindle pole. It is found in the microtubule organizing center. Its subcellular location is the centrosome. The protein resides in the centriole. Functionally, required for cerebral cortical development. Plays a role in neuronal proliferation and migration. Plays a role in mother-centriole-dependent centriole duplication; the function seems also to involve CEP152, CDK5RAP2 and CEP63 through a stepwise assembled complex at the centrosome that recruits CDK2 required for centriole duplication. This is WD repeat-containing protein 62 (Wdr62) from Mus musculus (Mouse).